A 241-amino-acid chain; its full sequence is METVDCGEAAPRAPQPASIQVHFHHESGLAKLLLGGCSLLQPLLLPRPRATSRALGRHRLLATSWVMQIVLGLLSGVLGGFLYIFSSTTLRNSGAPIWTGAVAVLAGAVAFIYEKRGGIYWALLRTLLALAAFSTATAATIIGAGRFYEYHFIFYKGICNVSPSWRPTGAPTLSPDLERLQQCTAYVNMLKALFISINAMLLGVWVLLLLASLLPLCLCCWRRYRRKEKRDLPLEETVRSE.

Residue serine 38 is modified to Phosphoserine. Transmembrane regions (helical) follow at residues 65–85 (WVMQ…LYIF), 93–113 (SGAP…AFIY), 127–147 (LLAL…AGRF), and 193–213 (LFIS…LASL).

The protein belongs to the TMEM176 family. As to quaternary structure, interacts with MCOLN2.

It is found in the membrane. This is Transmembrane protein 176A (TMEM176A) from Bos taurus (Bovine).